A 285-amino-acid polypeptide reads, in one-letter code: MPVVTMRQMLDNGVHFGHQTRRWNPKMKRFIFTERNGIYIIDLQQSLGFIDKAYEAVKATVAHGGTILFVGTKKQAQEAIAEQATRVGMPYVNHRWLGGMLTNFQTVSKRIDRMKELEEVDFDDVAGSQYTKKELLLLRREKEKLERTLGGIRNLTKTPSLIWIVDTKKEHLAVDEAQKLGVPIVAILDTNCDPDEVAFPIPGNDDSIRSVSLLTRVVADAVAEGLMKRHNGKSNAAEEPMAEWERELLEQHEEQKSQDAAPAEQSAPAAEAPAETEQKDAPAAE.

Residues 229–285 form a disordered region; that stretch reads RHNGKSNAAEEPMAEWERELLEQHEEQKSQDAAPAEQSAPAAEAPAETEQKDAPAAE. Residues 243 to 257 are compositionally biased toward basic and acidic residues; that stretch reads EWERELLEQHEEQKS. Over residues 260–275 the composition is skewed to low complexity; that stretch reads AAPAEQSAPAAEAPAE. The segment covering 276–285 has biased composition (basic and acidic residues); sequence TEQKDAPAAE.

Belongs to the universal ribosomal protein uS2 family.

The polypeptide is Small ribosomal subunit protein uS2 (Kocuria rhizophila (strain ATCC 9341 / DSM 348 / NBRC 103217 / DC2201)).